We begin with the raw amino-acid sequence, 304 residues long: Hairy/enhancer-of-split related with YRPW motif protein 1 (304 aa).

Residues 1 to 52 (MKRAHPEYSSSDSELDETIEVEKESADENGNLSSALGSMSPTTSSQILARKR) are disordered. Residues 28–47 (ENGNLSSALGSMSPTTSSQI) show a composition bias toward polar residues. The interval 48 to 117 (LARKRRRGII…GGKGYFDAHA (70 aa)) is transcriptional repression and interaction with NCOR1 and SIN3A. Residues 49-104 (ARKRRRGIIEKRRRDRINNSLSELRRLVPSAFEKQGSAKLEKAEILQMTVDHLKML) form the bHLH domain. The 37-residue stretch at 122–158 (YRSLGFRECLAEVARYLSIIEGLDASDPLRVRLVSHL) folds into the Orange domain. A disordered region spans residues 196–234 (LPQNGHGNAGTTASPTEPHHQGRLGSAHPEAPALRAPPS). A compositionally biased stretch (polar residues) spans 200–210 (GHGNAGTTASP). The short motif at 294–297 (YRPW) is the YRPW motif element.

This sequence belongs to the HEY family. In terms of assembly, self-associates. Interacts with HES1 and HEYL. Interacts with HDAC1, NCOR1 and SIN3A. Interacts with GATA4 and GATA6. Interacts with CCDC89/BOIP. In terms of tissue distribution, expressed in the somitic mesoderm, the central nervous system, the kidney, the heart, nasal epithelium, and limbs.

The protein resides in the nucleus. Transcriptional repressor which binds preferentially to the canonical E box sequence 5'-CACGTG-3'. Downstream effector of Notch signaling required for cardiovascular development. Specifically required for the Notch-induced endocardial epithelial to mesenchymal transition, which is itself criticial for cardiac valve and septum development. May be required in conjunction with HEY2 to specify arterial cell fate or identity. Promotes maintenance of neuronal precursor cells and glial versus neuronal fate specification. Represses transcription by the cardiac transcriptional activators GATA4 and GATA6 and by the neuronal bHLH factors ASCL1/MASH1 and NEUROD4/MATH3. Involved in the regulation of liver cancer cells self-renewal. The protein is Hairy/enhancer-of-split related with YRPW motif protein 1 (HEY1) of Homo sapiens (Human).